The following is a 299-amino-acid chain: Recombination-associated protein RdgC (299 aa).

It belongs to the RdgC family.

It localises to the cytoplasm. The protein localises to the nucleoid. Its function is as follows. May be involved in recombination. The protein is Recombination-associated protein RdgC of Cupriavidus pinatubonensis (strain JMP 134 / LMG 1197) (Cupriavidus necator (strain JMP 134)).